The sequence spans 639 residues: Phosphomethylpyrimidine synthase (639 aa).

Residues 49–71 (DTPTDFGGEQNRPVRVYDTSGPY) are disordered. Substrate contacts are provided by residues asparagine 231, methionine 260, tyrosine 289, histidine 325, 345–347 (SRG), 386–389 (DGLR), and glutamate 425. Histidine 429 provides a ligand contact to Zn(2+). Substrate is bound at residue tyrosine 452. Zn(2+) is bound at residue histidine 493. Cysteine 573, cysteine 576, and cysteine 581 together coordinate [4Fe-4S] cluster.

This sequence belongs to the ThiC family. In terms of assembly, homodimer. [4Fe-4S] cluster serves as cofactor.

The catalysed reaction is 5-amino-1-(5-phospho-beta-D-ribosyl)imidazole + S-adenosyl-L-methionine = 4-amino-2-methyl-5-(phosphooxymethyl)pyrimidine + CO + 5'-deoxyadenosine + formate + L-methionine + 3 H(+). The protein operates within cofactor biosynthesis; thiamine diphosphate biosynthesis. Functionally, catalyzes the synthesis of the hydroxymethylpyrimidine phosphate (HMP-P) moiety of thiamine from aminoimidazole ribotide (AIR) in a radical S-adenosyl-L-methionine (SAM)-dependent reaction. This chain is Phosphomethylpyrimidine synthase, found in Teredinibacter turnerae (strain ATCC 39867 / T7901).